Consider the following 557-residue polypeptide: DNA ligase (557 aa).

Glutamate 249 contributes to the ATP binding site. The active-site N6-AMP-lysine intermediate is the lysine 251. ATP contacts are provided by arginine 256, arginine 271, glutamate 301, phenylalanine 340, arginine 417, and lysine 423.

It belongs to the ATP-dependent DNA ligase family. Mg(2+) is required as a cofactor.

The enzyme catalyses ATP + (deoxyribonucleotide)n-3'-hydroxyl + 5'-phospho-(deoxyribonucleotide)m = (deoxyribonucleotide)n+m + AMP + diphosphate.. Functionally, DNA ligase that seals nicks in double-stranded DNA during DNA replication, DNA recombination and DNA repair. The polypeptide is DNA ligase (Methanothermobacter thermautotrophicus (Methanobacterium thermoformicicum)).